Reading from the N-terminus, the 257-residue chain is Imidazole glycerol phosphate synthase subunit HisF (257 aa).

Catalysis depends on residues Asp12 and Asp131.

This sequence belongs to the HisA/HisF family. Heterodimer of HisH and HisF.

It is found in the cytoplasm. The enzyme catalyses 5-[(5-phospho-1-deoxy-D-ribulos-1-ylimino)methylamino]-1-(5-phospho-beta-D-ribosyl)imidazole-4-carboxamide + L-glutamine = D-erythro-1-(imidazol-4-yl)glycerol 3-phosphate + 5-amino-1-(5-phospho-beta-D-ribosyl)imidazole-4-carboxamide + L-glutamate + H(+). It functions in the pathway amino-acid biosynthesis; L-histidine biosynthesis; L-histidine from 5-phospho-alpha-D-ribose 1-diphosphate: step 5/9. In terms of biological role, IGPS catalyzes the conversion of PRFAR and glutamine to IGP, AICAR and glutamate. The HisF subunit catalyzes the cyclization activity that produces IGP and AICAR from PRFAR using the ammonia provided by the HisH subunit. In Mycobacteroides abscessus (strain ATCC 19977 / DSM 44196 / CCUG 20993 / CIP 104536 / JCM 13569 / NCTC 13031 / TMC 1543 / L948) (Mycobacterium abscessus), this protein is Imidazole glycerol phosphate synthase subunit HisF.